Reading from the N-terminus, the 300-residue chain is tRNA dimethylallyltransferase (300 aa).

Residue 9–16 (GTTASGKS) coordinates ATP. 11-16 (TASGKS) contributes to the substrate binding site. The interaction with substrate tRNA stretch occupies residues 34-37 (DSLC).

Belongs to the IPP transferase family. Monomer. Mg(2+) is required as a cofactor.

The catalysed reaction is adenosine(37) in tRNA + dimethylallyl diphosphate = N(6)-dimethylallyladenosine(37) in tRNA + diphosphate. Catalyzes the transfer of a dimethylallyl group onto the adenine at position 37 in tRNAs that read codons beginning with uridine, leading to the formation of N6-(dimethylallyl)adenosine (i(6)A). This Campylobacter fetus subsp. fetus (strain 82-40) protein is tRNA dimethylallyltransferase.